The sequence spans 423 residues: Serine hydroxymethyltransferase 2 (423 aa).

(6S)-5,6,7,8-tetrahydrofolate-binding positions include Leu-121 and 125–127; that span reads GHL. The residue at position 230 (Lys-230) is an N6-(pyridoxal phosphate)lysine. Position 356–358 (356–358) interacts with (6S)-5,6,7,8-tetrahydrofolate; sequence SPF.

It belongs to the SHMT family. In terms of assembly, homodimer. Pyridoxal 5'-phosphate serves as cofactor.

Its subcellular location is the cytoplasm. The enzyme catalyses (6R)-5,10-methylene-5,6,7,8-tetrahydrofolate + glycine + H2O = (6S)-5,6,7,8-tetrahydrofolate + L-serine. It participates in one-carbon metabolism; tetrahydrofolate interconversion. The protein operates within amino-acid biosynthesis; glycine biosynthesis; glycine from L-serine: step 1/1. Catalyzes the reversible interconversion of serine and glycine with tetrahydrofolate (THF) serving as the one-carbon carrier. This reaction serves as the major source of one-carbon groups required for the biosynthesis of purines, thymidylate, methionine, and other important biomolecules. Also exhibits THF-independent aldolase activity toward beta-hydroxyamino acids, producing glycine and aldehydes, via a retro-aldol mechanism. The protein is Serine hydroxymethyltransferase 2 of Pectobacterium atrosepticum (strain SCRI 1043 / ATCC BAA-672) (Erwinia carotovora subsp. atroseptica).